We begin with the raw amino-acid sequence, 96 residues long: 5-hydroxytryptamine receptor 2B (96 aa).

The Extracellular portion of the chain corresponds to 1–8 (CNQSTLQM). N2 carries an N-linked (GlcNAc...) asparagine glycan. Residues 9–30 (LLEIFVWIGYVSSGVNPLVYTL) form a helical membrane-spanning segment. Positions 24–28 (NPLVY) match the NPxxY motif; important for ligand-induced conformation changes and signaling motif. The Cytoplasmic segment spans residues 31–96 (FNKTFRDAFG…STMYQSPVRL (66 aa)). C45 carries the S-palmitoyl cysteine lipid modification.

This sequence belongs to the G-protein coupled receptor 1 family. As to quaternary structure, interacts (via C-terminus) with MPDZ.

It is found in the cell membrane. The protein localises to the synapse. The protein resides in the synaptosome. G-protein coupled receptor for 5-hydroxytryptamine (serotonin). Also functions as a receptor for various ergot alkaloid derivatives and psychoactive substances. Ligand binding causes a conformation change that triggers signaling via guanine nucleotide-binding proteins (G proteins) and modulates the activity of downstream effectors. HTR2B is coupled to G(q)/G(11) G alpha proteins and activates phospholipase C-beta, releasing diacylglycerol (DAG) and inositol 1,4,5-trisphosphate (IP3) second messengers that modulate the activity of phosphatidylinositol 3-kinase and promote the release of Ca(2+) ions from intracellular stores, respectively. Beta-arrestin family members inhibit signaling via G proteins and mediate activation of alternative signaling pathways. Plays a role in the regulation of dopamine and 5-hydroxytryptamine release, 5-hydroxytryptamine uptake and in the regulation of extracellular dopamine and 5-hydroxytryptamine levels, and thereby affects neural activity. May play a role in the perception of pain. Plays a role in the regulation of behavior, including impulsive behavior. Required for normal proliferation of embryonic cardiac myocytes and normal heart development. Protects cardiomyocytes against apoptosis. Plays a role in the adaptation of pulmonary arteries to chronic hypoxia. Plays a role in vasoconstriction. Required for normal osteoblast function and proliferation, and for maintaining normal bone density. Required for normal proliferation of the interstitial cells of Cajal in the intestine. The sequence is that of 5-hydroxytryptamine receptor 2B (HTR2B) from Cavia porcellus (Guinea pig).